The primary structure comprises 908 residues: Glutamate receptor ionotropic, kainate 2 (908 aa).

A signal peptide spans 1 to 31 (MKIISPVLSNLVFSRSIKVLLCLLWIGYSQG). The Extracellular portion of the chain corresponds to 32-561 (TTHVLRFGGI…VFSFLNPLSP (530 aa)). Residues N67, N73, N275, N378, N412, N423, and N430 are each glycosylated (N-linked (GlcNAc...) asparagine). An intrachain disulfide couples C96 to C347. 3 residues coordinate L-glutamate: P516, A518, and R523. N546 is a glycosylation site (N-linked (GlcNAc...) asparagine). Residues 562–582 (DIWMYILLAYLGVSCVLFVIA) form a helical membrane-spanning segment. The Cytoplasmic portion of the chain corresponds to 583–638 (RFSPYEWYNPHPCNPDSDVVENNFTLLNSFWFGVGALMQQGSELMPKALSTRIVGG). The helical transmembrane segment at 639–659 (IWWFFTLIIISSYTANLAAFL) threads the bilayer. The Extracellular portion of the chain corresponds to 660-819 (TVERMESPID…KEASALGVQN (160 aa)). Residues A689, T690, and E738 each coordinate L-glutamate. C750 and C804 form a disulfide bridge. N751 carries an N-linked (GlcNAc...) asparagine glycan. The helical transmembrane segment at 820 to 840 (IGGIFIVLAAGLVLSVFVAVG) threads the bilayer. The Cytoplasmic segment spans residues 841–908 (EFLYKSKKNA…RRLPGKETMA (68 aa)). Residues S846 and S868 each carry the phosphoserine; by PKC modification. K886 is covalently cross-linked (Glycyl lysine isopeptide (Lys-Gly) (interchain with G-Cter in SUMO1)).

The protein belongs to the glutamate-gated ion channel (TC 1.A.10.1) family. GRIK2 subfamily. In terms of assembly, homotetramer and heterotetramer with GRIK5. Tetramers may be formed by the dimerization of dimers. Assembles into a kainate-gated homomeric channel that does not bind AMPA. Can form functional heteromeric receptors with GRIK4 and GRIK5. Can form functional heteromeric receptors with GRIK3. Interacts with DLG4. Interacts with NETO2. Interacts (via C-terminus) with KLHL17 (via kelch repeats); the interaction targets GRIK2 for degradation via ubiquitin-proteasome pathway. Post-translationally, sumoylation mediates kainate receptor-mediated endocytosis and regulates synaptic transmission. Sumoylation is enhanced by PIAS3 and desumoylated by SENP1. Ubiquitinated. Ubiquitination regulates the GRIK2 levels at the synapse by leading kainate receptor degradation through proteasome. In terms of processing, phosphorylated by PKC at Ser-868 upon agonist activation, this directly enhance sumoylation. Highest expression is found in the olfactory lobe, piriform cortex, dentate gyrus, hippocampus, granular cell layer of the cerebellum, and in caudate-putamen.

It localises to the cell membrane. It is found in the postsynaptic cell membrane. It catalyses the reaction Ca(2+)(in) = Ca(2+)(out). It carries out the reaction Na(+)(in) = Na(+)(out). Cold receptor activity activated by temperatures between 10-19 degrees Celsius. Its function is as follows. Ionotropic glutamate receptor that functions as a cation-permeable ligand-gated ion channel, gated by L-glutamate and the glutamatergic agonist kainic acid. L-glutamate acts as an excitatory neurotransmitter at many synapses in the central nervous system. Binding of the excitatory neurotransmitter L-glutamate induces a conformation change, leading to the opening of the cation channel, and thereby converts the chemical signal to an electrical impulse. The receptor then desensitizes rapidly and enters a transient inactive state, characterized by the presence of bound agonist. Modulates cell surface expression of NETO2. In association with GRIK3, involved in presynaptic facilitation of glutamate release at hippocampal mossy fiber synapses. Independent of its ionotropic glutamate receptor activity, acts as a thermoreceptor conferring sensitivity to cold temperatures. Functions in dorsal root ganglion neurons. The chain is Glutamate receptor ionotropic, kainate 2 (Grik2) from Rattus norvegicus (Rat).